The sequence spans 365 residues: Phospho-N-acetylmuramoyl-pentapeptide-transferase (365 aa).

9 consecutive transmembrane segments (helical) span residues 19–39 (LLILLTVVLFLLMTLFQWLLT), 47–67 (AVILPVSVSAIACGLLGFGVI), 91–111 (AGTPTMGGIFFIPVAVGVALI), 115–135 (FDPQVVAVGIVTLAYMMIGWV), 155–175 (LLLQIAVAVLFCLWMLWTGSP), 184–204 (GNLIIPLGWLFWILAIFVLVA), 224–244 (AIAFLGLAAIVAPTSVGLMIF), 281–301 (AVGLLSGNLWGLFIISGIFFV), and 344–364 (TQIVGVFYLINAGLAILGFIS).

Belongs to the glycosyltransferase 4 family. MraY subfamily. Requires Mg(2+) as cofactor.

The protein localises to the cell inner membrane. It carries out the reaction UDP-N-acetyl-alpha-D-muramoyl-L-alanyl-gamma-D-glutamyl-meso-2,6-diaminopimeloyl-D-alanyl-D-alanine + di-trans,octa-cis-undecaprenyl phosphate = di-trans,octa-cis-undecaprenyl diphospho-N-acetyl-alpha-D-muramoyl-L-alanyl-D-glutamyl-meso-2,6-diaminopimeloyl-D-alanyl-D-alanine + UMP. It participates in cell wall biogenesis; peptidoglycan biosynthesis. In terms of biological role, catalyzes the initial step of the lipid cycle reactions in the biosynthesis of the cell wall peptidoglycan: transfers peptidoglycan precursor phospho-MurNAc-pentapeptide from UDP-MurNAc-pentapeptide onto the lipid carrier undecaprenyl phosphate, yielding undecaprenyl-pyrophosphoryl-MurNAc-pentapeptide, known as lipid I. The polypeptide is Phospho-N-acetylmuramoyl-pentapeptide-transferase (Gloeothece citriformis (strain PCC 7424) (Cyanothece sp. (strain PCC 7424))).